The primary structure comprises 334 residues: Ferredoxin--NADP reductase (334 aa).

FAD is bound by residues D33, Q41, Y46, A86, F120, D286, and T327.

It belongs to the ferredoxin--NADP reductase type 2 family. Homodimer. It depends on FAD as a cofactor.

The catalysed reaction is 2 reduced [2Fe-2S]-[ferredoxin] + NADP(+) + H(+) = 2 oxidized [2Fe-2S]-[ferredoxin] + NADPH. The chain is Ferredoxin--NADP reductase from Rickettsia prowazekii (strain Madrid E).